We begin with the raw amino-acid sequence, 691 residues long: Protein 4.2 (691 aa).

Gly-2 carries N-myristoyl glycine lipidation. The interval 31-39 (LFVRRGQPF) is band 3 binding. The residue at position 248 (Ser-248) is a Phosphoserine; by PKA.

This sequence belongs to the transglutaminase superfamily. Transglutaminase family. Component of the ankyrin-1 complex in the erythrocyte, composed of ANK1, RHCE, RHAG, SLC4A1, EPB42, GYPA, GYPB and AQP1. Interacts with SLC4A1 (via the cytoplasmic domain); this interaction is mediated by the SLC4A1 Band 3-I dimer. Interacts with ANK1 (via ANK 1-13 repeats). Interacts with AQP1 (via the C-terminal). Both cAMP-dependent kinase (CAPK) and another kinase present in the red-blood cells seem to be able to phosphorylate EPB42.

It is found in the cell membrane. It localises to the cytoplasm. The protein resides in the cytoskeleton. In terms of biological role, component of the ankyrin-1 complex, a multiprotein complex involved in the stability and shape of the erythrocyte membrane. This Homo sapiens (Human) protein is Protein 4.2.